We begin with the raw amino-acid sequence, 443 residues long: Tubulin epsilon and delta complex protein 2 (443 aa).

Residues 8–33 adopt a coiled-coil conformation; the sequence is RRLVAELRDALDSCAERQRQLEQSLR. Disordered regions lie at residues 45 to 72 and 93 to 146; these read AETP…PSPQ and GLSK…PWVP. Low complexity predominate over residues 106 to 124; that stretch reads LKSGSASTATKASAPPSTS.

In terms of assembly, interacts with TEDC1. Found in a complex with TEDC1, TEDC2, TUBE1 and TUBD1.

It is found in the cell projection. It localises to the cilium. Its subcellular location is the cytoplasm. The protein localises to the cytoskeleton. The protein resides in the microtubule organizing center. It is found in the centrosome. It localises to the centriole. Its function is as follows. Acts as a positive regulator of ciliary hedgehog signaling. Required for centriole stability. This chain is Tubulin epsilon and delta complex protein 2, found in Bos taurus (Bovine).